Reading from the N-terminus, the 311-residue chain is Ribosomal RNA small subunit methyltransferase H (311 aa).

S-adenosyl-L-methionine is bound by residues 32-34 (AGH), Asp-52, Phe-79, Asp-100, and Gln-107. Positions 289–298 (SKEELEENNR) are enriched in basic and acidic residues. Residues 289-311 (SKEELEENNRARSAKLRIAEKRK) are disordered. Positions 300–311 (RSAKLRIAEKRK) are enriched in basic residues.

It belongs to the methyltransferase superfamily. RsmH family.

Its subcellular location is the cytoplasm. The enzyme catalyses cytidine(1402) in 16S rRNA + S-adenosyl-L-methionine = N(4)-methylcytidine(1402) in 16S rRNA + S-adenosyl-L-homocysteine + H(+). Functionally, specifically methylates the N4 position of cytidine in position 1402 (C1402) of 16S rRNA. The polypeptide is Ribosomal RNA small subunit methyltransferase H (Bacillus velezensis (strain DSM 23117 / BGSC 10A6 / LMG 26770 / FZB42) (Bacillus amyloliquefaciens subsp. plantarum)).